Here is a 422-residue protein sequence, read N- to C-terminus: Protein phosphatase methylesterase 1 (422 aa).

Residues 1-27 (MSDMFRKSVLNKLPHLPPTRAPWADES) are disordered. Catalysis depends on residues Ser207, Asp234, and His371.

It belongs to the AB hydrolase superfamily.

It carries out the reaction [phosphatase 2A protein]-C-terminal L-leucine methyl ester + H2O = [phosphatase 2A protein]-C-terminal L-leucine + methanol + H(+). Demethylates proteins that have been reversibly carboxymethylated. Demethylates the phosphatase PP2A catalytic subunit. This Cryptococcus neoformans var. neoformans serotype D (strain B-3501A) (Filobasidiella neoformans) protein is Protein phosphatase methylesterase 1 (PPE1).